The chain runs to 136 residues: Translation initiation factor 5A (136 aa).

Lysine 37 is modified (hypusine).

This sequence belongs to the eIF-5A family.

Its subcellular location is the cytoplasm. Its function is as follows. Functions by promoting the formation of the first peptide bond. This chain is Translation initiation factor 5A (eIF5A), found in Thermococcus onnurineus (strain NA1).